A 501-amino-acid polypeptide reads, in one-letter code: Glycerol kinase (501 aa).

Thr-17 provides a ligand contact to ADP. The ATP site is built by Thr-17, Thr-18, and Ser-19. Position 17 (Thr-17) interacts with sn-glycerol 3-phosphate. Arg-21 contacts ADP. Sn-glycerol 3-phosphate-binding residues include Arg-87, Glu-88, Tyr-139, and Asp-243. 5 residues coordinate glycerol: Arg-87, Glu-88, Tyr-139, Asp-243, and Gln-244. Residues Thr-265 and Gly-308 each coordinate ADP. ATP-binding residues include Thr-265, Gly-308, Gln-312, and Gly-409. The ADP site is built by Gly-409 and Asn-413.

Belongs to the FGGY kinase family.

The enzyme catalyses glycerol + ATP = sn-glycerol 3-phosphate + ADP + H(+). It participates in polyol metabolism; glycerol degradation via glycerol kinase pathway; sn-glycerol 3-phosphate from glycerol: step 1/1. Inhibited by fructose 1,6-bisphosphate (FBP). Key enzyme in the regulation of glycerol uptake and metabolism. Catalyzes the phosphorylation of glycerol to yield sn-glycerol 3-phosphate. This Pseudomonas savastanoi pv. phaseolicola (strain 1448A / Race 6) (Pseudomonas syringae pv. phaseolicola (strain 1448A / Race 6)) protein is Glycerol kinase.